We begin with the raw amino-acid sequence, 312 residues long: Ribonuclease Z (312 aa).

Zn(2+) contacts are provided by histidine 62, histidine 64, aspartate 66, histidine 67, histidine 144, aspartate 215, and histidine 273. The active-site Proton acceptor is the aspartate 66.

This sequence belongs to the RNase Z family. As to quaternary structure, homodimer. Zn(2+) is required as a cofactor.

It catalyses the reaction Endonucleolytic cleavage of RNA, removing extra 3' nucleotides from tRNA precursor, generating 3' termini of tRNAs. A 3'-hydroxy group is left at the tRNA terminus and a 5'-phosphoryl group is left at the trailer molecule.. In terms of biological role, zinc phosphodiesterase, which displays some tRNA 3'-processing endonuclease activity. Probably involved in tRNA maturation, by removing a 3'-trailer from precursor tRNA. This chain is Ribonuclease Z, found in Prochlorococcus marinus subsp. pastoris (strain CCMP1986 / NIES-2087 / MED4).